A 386-amino-acid chain; its full sequence is L-lactate dehydrogenase (386 aa).

The 380-residue stretch at 1-380 (MIISASTDYR…TSDSLVQVTQ (380 aa)) folds into the FMN hydroxy acid dehydrogenase domain. Tyr-24 contacts substrate. Residues Ser-106 and Gln-127 each coordinate FMN. Tyr-129 serves as a coordination point for substrate. Thr-155 provides a ligand contact to FMN. A substrate-binding site is contributed by Arg-164. Position 251 (Lys-251) interacts with FMN. Catalysis depends on His-275, which acts as the Proton acceptor. Residue Arg-278 participates in substrate binding. FMN is bound at residue 306–330 (DSGIRSGLDVVRMIALGADGVMLGR).

Belongs to the FMN-dependent alpha-hydroxy acid dehydrogenase family. FMN serves as cofactor.

It localises to the cell inner membrane. The catalysed reaction is (S)-lactate + A = pyruvate + AH2. Its function is as follows. Catalyzes the conversion of L-lactate to pyruvate. Is coupled to the respiratory chain. The sequence is that of L-lactate dehydrogenase from Pectobacterium atrosepticum (strain SCRI 1043 / ATCC BAA-672) (Erwinia carotovora subsp. atroseptica).